Reading from the N-terminus, the 174-residue chain is Protein GrpE (174 aa).

The interval Met-1–Ala-35 is disordered. Residues Glu-17–Ala-35 show a composition bias toward basic and acidic residues.

This sequence belongs to the GrpE family. In terms of assembly, homodimer.

It is found in the cytoplasm. Its function is as follows. Participates actively in the response to hyperosmotic and heat shock by preventing the aggregation of stress-denatured proteins, in association with DnaK and GrpE. It is the nucleotide exchange factor for DnaK and may function as a thermosensor. Unfolded proteins bind initially to DnaJ; upon interaction with the DnaJ-bound protein, DnaK hydrolyzes its bound ATP, resulting in the formation of a stable complex. GrpE releases ADP from DnaK; ATP binding to DnaK triggers the release of the substrate protein, thus completing the reaction cycle. Several rounds of ATP-dependent interactions between DnaJ, DnaK and GrpE are required for fully efficient folding. The sequence is that of Protein GrpE from Streptococcus pneumoniae serotype 4 (strain ATCC BAA-334 / TIGR4).